Reading from the N-terminus, the 207-residue chain is Large ribosomal subunit protein uL4 (207 aa).

Basic and acidic residues predominate over residues 44–58; that stretch reads RAPTRATRERSDVAR. Residues 44–82 form a disordered region; the sequence is RAPTRATRERSDVARSGKKFGRQKGGGTARHGDRRSPIF.

It belongs to the universal ribosomal protein uL4 family. As to quaternary structure, part of the 50S ribosomal subunit.

In terms of biological role, one of the primary rRNA binding proteins, this protein initially binds near the 5'-end of the 23S rRNA. It is important during the early stages of 50S assembly. It makes multiple contacts with different domains of the 23S rRNA in the assembled 50S subunit and ribosome. Forms part of the polypeptide exit tunnel. The protein is Large ribosomal subunit protein uL4 of Zymomonas mobilis subsp. mobilis (strain ATCC 31821 / ZM4 / CP4).